Consider the following 134-residue polypeptide: Arsenate reductase (134 aa).

Residues Cys-11, Cys-83, and Cys-90 each act as nucleophile in the active site. 2 disulfides stabilise this stretch: Cys-11/Cys-83 and Cys-83/Cys-90.

Belongs to the low molecular weight phosphotyrosine protein phosphatase family. Thioredoxin-coupled ArsC subfamily.

Its subcellular location is the cytoplasm. The catalysed reaction is arsenate + [thioredoxin]-dithiol + H(+) = arsenite + [thioredoxin]-disulfide + H2O. Its function is as follows. Catalyzes the reduction of arsenate [As(V)] to arsenite [As(III)]. This Bacillus cereus (strain 03BB102) protein is Arsenate reductase.